We begin with the raw amino-acid sequence, 357 residues long: Dihydroorotate dehydrogenase (quinone) (357 aa).

Residues 65 to 69 (AGLDK) and T89 each bind FMN. K69 lines the substrate pocket. 114-118 (NRFGF) contributes to the substrate binding site. The FMN site is built by N156 and N189. N189 contacts substrate. S192 serves as the catalytic Nucleophile. N194 contributes to the substrate binding site. Positions 234 and 262 each coordinate FMN. 263-264 (NT) serves as a coordination point for substrate. Residues G285, G314, and 335–336 (YT) each bind FMN.

It belongs to the dihydroorotate dehydrogenase family. Type 2 subfamily. In terms of assembly, monomer. FMN serves as cofactor.

The protein resides in the cell membrane. It catalyses the reaction (S)-dihydroorotate + a quinone = orotate + a quinol. It functions in the pathway pyrimidine metabolism; UMP biosynthesis via de novo pathway; orotate from (S)-dihydroorotate (quinone route): step 1/1. Functionally, catalyzes the conversion of dihydroorotate to orotate with quinone as electron acceptor. This is Dihydroorotate dehydrogenase (quinone) from Albidiferax ferrireducens (strain ATCC BAA-621 / DSM 15236 / T118) (Rhodoferax ferrireducens).